The sequence spans 2567 residues: Unconventional myosin-XVIIIb (2567 aa).

Positions 41-508 (LVRGTEKEAK…SRDSDQAPED (468 aa)) are disordered. Positions 44–54 (GTEKEAKEARQ) are enriched in basic and acidic residues. Positions 71–104 (SISQPNSKSSSGTRSGSQQISQDDQSSSPGSSDI) are enriched in low complexity. 2 stretches are compositionally biased toward basic and acidic residues: residues 105 to 116 (LGKESEGSRSPD) and 160 to 176 (LDPD…HDAP). The span at 196 to 206 (SRTPCGSQAST) shows a compositional bias: polar residues. Basic and acidic residues-rich tracts occupy residues 251-265 (TELK…DRQG), 278-287 (RPGKAEKEGA), and 326-349 (SKWD…EKTG). A compositionally biased stretch (polar residues) spans 350-362 (EPQTQMEKTSQVQ). 4 stretches are compositionally biased toward basic and acidic residues: residues 367-377 (DDLRMGEKAGE), 410-420 (SQTEKGCEAPK), 471-485 (LEKD…KENQ), and 492-508 (EEGK…APED). The region spanning 571–1333 (DQVEDLASLI…VISRLEKQRE (763 aa)) is the Myosin motor domain. 660–667 (GWSGAGKT) is a binding site for ATP. Positions 1208–1232 (VESRSGQESPPPPQPGRDKPGAGGP) are disordered. Residues 1213 to 1240 (GQESPPPPQPGRDKPGAGGPLALDIPAL) form a GPA region. A Phosphoserine modification is found at serine 1216. One can recognise an IQ domain in the interval 1336–1365 (VSQSIVLFQAACKGFLSRQEFKKLKIRRLA). Coiled-coil stretches lie at residues 1396-1783 (SATI…GLIG), 1825-1961 (KTSV…STVD), and 2014-2090 (ESQQ…VASS). A tail region spans residues 1426 to 2083 (NELRQNTDLL…IRRIADLQAA (658 aa)). Position 1829 is a phosphoserine (serine 1829). Positions 2139-2153 (TMRTPSRQSATSSRI) are enriched in polar residues. Disordered stretches follow at residues 2139-2194 (TMRT…PVSP) and 2217-2249 (STER…PSAA). The segment covering 2158–2167 (INEEAGDTER) has biased composition (basic and acidic residues). Polar residues predominate over residues 2168–2185 (TQSALALSRARSTNVHSK). Serine 2193 carries the post-translational modification Phosphoserine. Residues 2227-2238 (PLASRSTNTSPL) are compositionally biased toward polar residues. Phosphoserine is present on residues serine 2296 and serine 2309. The disordered stretch occupies residues 2357–2376 (SRPSMGRKLSSPTTPRDMLL). A Phosphoserine modification is found at serine 2377. Disordered stretches follow at residues 2444-2471 (FLPA…SQRS) and 2494-2567 (KSPE…YLQK). Residues 2494–2504 (KSPEPKEDPAH) show a composition bias toward basic and acidic residues. Over residues 2506 to 2520 (SDSSSSSGSIVSFKS) the composition is skewed to low complexity. Residues 2537 to 2556 (GGERTSPERREPGTGRKDDD) show a composition bias toward basic and acidic residues.

The protein belongs to the TRAFAC class myosin-kinesin ATPase superfamily. Myosin family. In terms of assembly, homodimer. May interact with F actin through the GPA motif (Gly/Pro/Ala-rich). Selectively expressed in cardiac and skeletal muscles. Weakly expressed in testis, pancreas, placenta, prostate, lung and thymus.

The protein resides in the cytoplasm. The protein localises to the nucleus. It localises to the myofibril. Its subcellular location is the sarcomere. In terms of biological role, may be involved in intracellular trafficking of the muscle cell when in the cytoplasm, whereas entering the nucleus, may be involved in the regulation of muscle specific genes. May play a role in the control of tumor development and progression; restored MYO18B expression in lung cancer cells suppresses anchorage-independent growth. This is Unconventional myosin-XVIIIb (MYO18B) from Homo sapiens (Human).